The following is a 430-amino-acid chain: Glial fibrillary acidic protein (430 aa).

Residues Met-1–Glu-69 are head. The residue at position 7 (Thr-7) is a Phosphothreonine; by AURKB and ROCK1. Position 11 is an omega-N-methylarginine (Arg-11). A Phosphoserine; by AURKB and ROCK1 modification is found at Ser-12. Residue Arg-20 is modified to Omega-N-methylarginine. Arg-33 is subject to Citrulline. Ser-35 bears the Phosphoserine; by AURKB and ROCK1 mark. At Thr-40 the chain carries Phosphothreonine. Positions Glu-66 to Ile-374 constitute an IF rod domain. The interval Met-70–Leu-101 is coil 1A. Ser-79 carries the phosphoserine modification. Positions Arg-102 to Val-112 are linker 1. Phosphothreonine occurs at positions 107 and 147. Positions Tyr-113–Gln-211 are coil 1B. A linker 12 region spans residues Leu-212 to Asp-227. The interval Leu-228–Glu-249 is coil 2A. The tract at residues Thr-250–Trp-253 is linker 2. The segment at Tyr-254–Ile-374 is coil 2B. Residue Ser-266 is modified to Phosphoserine. The residue at position 267 (Arg-267) is a Citrulline. Ser-320 bears the Phosphoserine mark. Positions Thr-375–Met-430 are tail. A Phosphothreonine modification is found at Thr-380. Ser-382 is subject to Phosphoserine. Arg-403 and Arg-413 each carry citrulline.

The protein belongs to the intermediate filament family. Interacts with SYNM. As to quaternary structure, interacts with PSEN1 (via N-terminus). Post-translationally, phosphorylated by PKN1. Brain; isoform 2 expressed at 20-fold lower level than isoform 1.

It localises to the cytoplasm. GFAP, a class-III intermediate filament, is a cell-specific marker that, during the development of the central nervous system, distinguishes astrocytes from other glial cells. This is Glial fibrillary acidic protein (Gfap) from Mus musculus (Mouse).